The primary structure comprises 1033 residues: Ubiquitin carboxyl-terminal hydrolase 48 (1033 aa).

Residues 89-419 (VGLTNLGATC…NAYMLVYRLQ (331 aa)) form the USP domain. Cys-98 acts as the Nucleophile in catalysis. His-351 serves as the catalytic Proton acceptor. DUSP domains lie at 457 to 552 (QSVA…KALC), 567 to 690 (NQLN…NKEC), and 710 to 823 (MMAS…RTRA). The segment at 610 to 639 (EQDEDAEHSNGKLNGNAPNKDEVNEEKREE) is disordered. Positions 878-920 (APELNVSSSEAEEEREENKPEGEQDPDFNQSNGGAKRQKLSHQ) are disordered. Positions 931-1007 (RRSTRHRKVR…ILLKADEPIA (77 aa)) constitute a Ubiquitin-like domain.

This sequence belongs to the peptidase C19 family.

The protein localises to the cytoplasm. Its subcellular location is the nucleus. The catalysed reaction is Thiol-dependent hydrolysis of ester, thioester, amide, peptide and isopeptide bonds formed by the C-terminal Gly of ubiquitin (a 76-residue protein attached to proteins as an intracellular targeting signal).. Its function is as follows. Recognizes and hydrolyzes the peptide bond at the C-terminal Gly of ubiquitin. Involved in the processing of poly-ubiquitin precursors as well as that of ubiquitinated proteins. The polypeptide is Ubiquitin carboxyl-terminal hydrolase 48 (USP48) (Gallus gallus (Chicken)).